Here is a 379-residue protein sequence, read N- to C-terminus: Alcohol dehydrogenase 1 (379 aa).

8 residues coordinate Zn(2+): cysteine 47, threonine 49, histidine 69, cysteine 99, cysteine 102, cysteine 105, cysteine 113, and cysteine 177. Residues threonine 49 and histidine 69 each contribute to the an alcohol site. NAD(+) is bound at residue threonine 49. Residues 202-207 (GLGAVG), aspartate 226, arginine 231, threonine 272, valine 295, 295-297 (VGV), phenylalanine 322, and arginine 372 each bind NAD(+).

This sequence belongs to the zinc-containing alcohol dehydrogenase family. As to quaternary structure, homodimer. The cofactor is Zn(2+).

Its subcellular location is the cytoplasm. It catalyses the reaction a primary alcohol + NAD(+) = an aldehyde + NADH + H(+). The enzyme catalyses a secondary alcohol + NAD(+) = a ketone + NADH + H(+). This is Alcohol dehydrogenase 1 (ADH1) from Oryza sativa subsp. indica (Rice).